The following is a 273-amino-acid chain: Putative pyruvate, phosphate dikinase regulatory protein (273 aa).

153–160 (GISRTSKT) contributes to the ADP binding site.

The protein belongs to the pyruvate, phosphate/water dikinase regulatory protein family. PDRP subfamily.

It catalyses the reaction N(tele)-phospho-L-histidyl/L-threonyl-[pyruvate, phosphate dikinase] + ADP = N(tele)-phospho-L-histidyl/O-phospho-L-threonyl-[pyruvate, phosphate dikinase] + AMP + H(+). The catalysed reaction is N(tele)-phospho-L-histidyl/O-phospho-L-threonyl-[pyruvate, phosphate dikinase] + phosphate + H(+) = N(tele)-phospho-L-histidyl/L-threonyl-[pyruvate, phosphate dikinase] + diphosphate. Bifunctional serine/threonine kinase and phosphorylase involved in the regulation of the pyruvate, phosphate dikinase (PPDK) by catalyzing its phosphorylation/dephosphorylation. The sequence is that of Putative pyruvate, phosphate dikinase regulatory protein from Rhizobium johnstonii (strain DSM 114642 / LMG 32736 / 3841) (Rhizobium leguminosarum bv. viciae).